The following is a 454-amino-acid chain: MAAKPGIPKGTRDFSPVEMAKRNYIFNTIRDVYHLYGFQQIETPSMEMLSTLMGKYGEEGDKLLFKIQNSGDYFSGITDEELLSRNAAKLASKFCEKGLRYDLTVPFARYVVMHRDEITFPFKRYQIQPVWRADRPQKGRYREFYQCDADVVGSDSLLNEVELMQIVDTVFTRFGIRVCIKINNRKILTGIAEIIGEADKIVDITVAIDKLDKIGLDNVNKELAEKGISEEAIAKLQPIILLSGTNTEKLATLKTVLSDSETGLKGVEESEFILNTLQTMGLKNEIELDLTLARGLNYYTGAIFEVKALDVQIGSITGGGRYDNLTGVFGMAGVSGVGISFGADRIFDVLNQLELYPKEAVNGTQLLFINFGEKEAAFSMGILSKARAAGIRAEIFPDAAKMKKQMSYANVKNIPFVAIVGENEMNEGKAMLKNMESGEQQLVTAEELIGALTK.

It belongs to the class-II aminoacyl-tRNA synthetase family. In terms of assembly, homodimer.

The protein resides in the cytoplasm. It carries out the reaction tRNA(His) + L-histidine + ATP = L-histidyl-tRNA(His) + AMP + diphosphate + H(+). The sequence is that of Histidine--tRNA ligase from Bacteroides fragilis (strain YCH46).